Reading from the N-terminus, the 377-residue chain is Histidinol-phosphate aminotransferase (377 aa).

At lysine 232 the chain carries N6-(pyridoxal phosphate)lysine.

This sequence belongs to the class-II pyridoxal-phosphate-dependent aminotransferase family. Histidinol-phosphate aminotransferase subfamily. As to quaternary structure, homodimer. Requires pyridoxal 5'-phosphate as cofactor.

The enzyme catalyses L-histidinol phosphate + 2-oxoglutarate = 3-(imidazol-4-yl)-2-oxopropyl phosphate + L-glutamate. It participates in amino-acid biosynthesis; L-histidine biosynthesis; L-histidine from 5-phospho-alpha-D-ribose 1-diphosphate: step 7/9. The sequence is that of Histidinol-phosphate aminotransferase from Mycobacterium sp. (strain JLS).